The chain runs to 154 residues: Protein X (154 aa).

Residues 68-117 (PCALRFTSARRMETTVNAPQSLPTPLHKRTLGLSPRSTTWIEEYIKDCVF) are mitochondrial targeting sequence.

This sequence belongs to the orthohepadnavirus protein X family. May form homodimer. May interact with host CEBPA, CFLAR, CREB1, DDB1, E4F1, HBXIP, HSPD1/HSP60, NFKBIA, POLR2E and SMAD4. Interacts with host SMC5-SMC6 complex and induces its degradation. Interacts with host TRPC4AP; leading to prevent ubiquitination of TRPC4AP. Interacts with host PLSCR1; this interaction promotes ubiquitination and degradation of HBx and impairs HBx-mediated cell proliferation. Post-translationally, a fraction may be phosphorylated in insect cells and HepG2 cells, a human hepatoblastoma cell line. Phosphorylated in vitro by host protein kinase C or mitogen-activated protein kinase. N-acetylated in insect cells.

The protein resides in the host cytoplasm. Its subcellular location is the host nucleus. The protein localises to the host mitochondrion. Functionally, multifunctional protein that plays a role in silencing host antiviral defenses and promoting viral transcription. Does not seem to be essential for HBV infection. May be directly involved in development of cirrhosis and liver cancer (hepatocellular carcinoma). Most of cytosolic activities involve modulation of cytosolic calcium. The effect on apoptosis is controversial depending on the cell types in which the studies have been conducted. May induce apoptosis by localizing in mitochondria and causing loss of mitochondrial membrane potential. May also modulate apoptosis by binding host CFLAR, a key regulator of the death-inducing signaling complex (DISC). Promotes viral transcription by using the host E3 ubiquitin ligase DDB1 to target the SMC5-SMC6 complex to proteasomal degradation. This host complex would otherwise bind to viral episomal DNA, and prevents its transcription. Moderately stimulates transcription of many different viral and cellular transcription elements. Promoters and enhancers stimulated by HBx contain DNA binding sites for NF-kappa-B, AP-1, AP-2, c-EBP, ATF/CREB, or the calcium-activated factor NF-AT. The polypeptide is Protein X (Homo sapiens (Human)).